The primary structure comprises 346 residues: tRNA N6-adenosine threonylcarbamoyltransferase (346 aa).

Residues histidine 110 and histidine 114 each contribute to the Fe cation site. Substrate-binding positions include 132 to 136 (LLSGG), aspartate 165, glycine 178, and asparagine 274. Aspartate 298 is a Fe cation binding site.

It belongs to the KAE1 / TsaD family. Fe(2+) serves as cofactor.

Its subcellular location is the cytoplasm. It catalyses the reaction L-threonylcarbamoyladenylate + adenosine(37) in tRNA = N(6)-L-threonylcarbamoyladenosine(37) in tRNA + AMP + H(+). Required for the formation of a threonylcarbamoyl group on adenosine at position 37 (t(6)A37) in tRNAs that read codons beginning with adenine. Is involved in the transfer of the threonylcarbamoyl moiety of threonylcarbamoyl-AMP (TC-AMP) to the N6 group of A37, together with TsaE and TsaB. TsaD likely plays a direct catalytic role in this reaction. The polypeptide is tRNA N6-adenosine threonylcarbamoyltransferase (Borreliella afzelii (strain PKo) (Borrelia afzelii)).